An 802-amino-acid polypeptide reads, in one-letter code: Serine/threonine-protein kinase zyg-8 (802 aa).

Over residues 1-13 (MPQTSAWQLNDTT) the composition is skewed to polar residues. Residues 1–102 (MPQTSAWQLN…SAPSTSSAHR (102 aa)) are disordered. Residues 15 to 24 (RPPPPPPPPG) show a composition bias toward pro residues. Over residues 89–99 (SPSSSAPSTSS) the composition is skewed to low complexity. 2 consecutive Doublecortin domains span residues 211-298 (KRLR…VDYS) and 340-423 (RIIK…ADDL). The interval 430–470 (HKSVGSGTSSNMRRTSRRSTMPNRNESLRHDRSGSVIPDQD) is disordered. The segment covering 434–454 (GSGTSSNMRRTSRRSTMPNRN) has biased composition (low complexity). Residues 482–743 (FQLVRLIGDG…AGELLNDEWM (262 aa)) enclose the Protein kinase domain. ATP-binding positions include 488-496 (IGDGNTAVV) and Lys-512. The active-site Proton acceptor is the Asp-604.

The protein belongs to the protein kinase superfamily. CAMK Ser/Thr protein kinase family. CaMK subfamily. In terms of assembly, interacts with tac-1. As to expression, expressed in AFD thermosensory neurons. Expressed in cells near the nerve ring, in motor neurons in the ventral nerve cord and in the six touch receptor neurons including ALML/R, PLML/R and AVM and PVM. Expressed in hypodermal and neural tissues and in the germline.

It localises to the cytoplasm. It is found in the cytoskeleton. The protein localises to the microtubule organizing center. Its subcellular location is the centrosome. The protein resides in the spindle. It carries out the reaction L-seryl-[protein] + ATP = O-phospho-L-seryl-[protein] + ADP + H(+). It catalyses the reaction L-threonyl-[protein] + ATP = O-phospho-L-threonyl-[protein] + ADP + H(+). Functionally, probable kinase. Kinase activity may be involved in positioning of spindle poles in meiosis and mitosis. Plays a role in spindle positioning during asymmetric division of one-cell stage embryos. Affects spindle position by promoting microtubule assembly during anaphase. Plays a role in the assembly and stability of oocyte spindle, perhaps balancing the forces in the spindle and maintaining their morphology during metaphase. Plays a role in cell division and in embryonic viability up until gastrulation. Required for neuronal morphology and polarity and restricting ectopic process outgrowth; probably as a result of a role in maintaining microtubule integrity. Involved in maintaining neuronal microtubule number, length and packing. May promote axonal and synaptic growth. Plays a role in regulating thermotaxis responses in AFD thermosensory neurons. Required for touch sensitivity in adult touch response receptor neurons. This is Serine/threonine-protein kinase zyg-8 from Caenorhabditis elegans.